We begin with the raw amino-acid sequence, 785 residues long: Cadherin-7 (785 aa).

Positions 1-27 (MKLGKVEFCHFLQLIALFLCFSGMSQA) are cleaved as a signal peptide. Positions 28-47 (ELSRSRSKPYFQSGRSRTKR) are excised as a propeptide. Topologically, residues 28-607 (ELSRSRSKPY…AYVLPAGLST (580 aa)) are extracellular. Cadherin domains follow at residues 49–153 (WVWN…EPKF), 154–262 (LDGP…PPRF), 263–377 (PRRS…PPVF), 378–482 (SSPL…APEF), and 482–599 (FAMD…AEAY). N449 and N530 each carry an N-linked (GlcNAc...) asparagine glycan. The chain crosses the membrane as a helical span at residues 608-628 (GALIAILACVLTLLVLILLIV). Residues 629-785 (TMRRRKKEPL…YGTGQESLYS (157 aa)) are Cytoplasmic-facing.

It localises to the cell membrane. Its function is as follows. Cadherins are calcium-dependent cell adhesion proteins. They preferentially interact with themselves in a homophilic manner in connecting cells; cadherins may thus contribute to the sorting of heterogeneous cell types. The chain is Cadherin-7 (CDH7) from Homo sapiens (Human).